The primary structure comprises 71 residues: MGSFSIWHWLIVLVIVALIFGTKKLRNIGSDLGGAVKGFKDGMQEANADKTEQVTQQQTTIDVQAKEKQNS.

The chain crosses the membrane as a helical span at residues 1-21; that stretch reads MGSFSIWHWLIVLVIVALIFG. Positions 48 to 71 are disordered; the sequence is ADKTEQVTQQQTTIDVQAKEKQNS.

This sequence belongs to the TatA/E family. As to quaternary structure, the Tat system comprises two distinct complexes: a TatABC complex, containing multiple copies of TatA, TatB and TatC subunits, and a separate TatA complex, containing only TatA subunits. Substrates initially bind to the TatABC complex, which probably triggers association of the separate TatA complex to form the active translocon.

Its subcellular location is the cell inner membrane. Its function is as follows. Part of the twin-arginine translocation (Tat) system that transports large folded proteins containing a characteristic twin-arginine motif in their signal peptide across membranes. TatA could form the protein-conducting channel of the Tat system. This is Sec-independent protein translocase protein TatA from Bordetella avium (strain 197N).